Consider the following 171-residue polypeptide: Large ribosomal subunit protein bL9 (171 aa).

This sequence belongs to the bacterial ribosomal protein bL9 family.

Functionally, binds to the 23S rRNA. This chain is Large ribosomal subunit protein bL9, found in Rickettsia akari (strain Hartford).